We begin with the raw amino-acid sequence, 111 residues long: uncharacterized protein (111 aa).

It belongs to the UPF0440 family.

This is an uncharacterized protein from Pyrococcus furiosus (strain ATCC 43587 / DSM 3638 / JCM 8422 / Vc1).